Here is a 674-residue protein sequence, read N- to C-terminus: Xaa-Pro aminopeptidase 2 (674 aa).

The signal sequence occupies residues 1–22 (MAQAYWQCYPWLVLLCACAWSY). Asn-65 carries an N-linked (GlcNAc...) asparagine glycan. Substrate is bound at residue Arg-116. 3 N-linked (GlcNAc...) asparagine glycosylation sites follow: Asn-270, Asn-278, and Asn-293. Residue His-430 participates in substrate binding. Zn(2+)-binding residues include Asp-450, Asp-461, and His-524. His-524, His-533, and Glu-555 together coordinate substrate. Zn(2+)-binding residues include Glu-555 and Glu-569. The GPI-anchor amidated alanine moiety is linked to residue Ala-650. Positions 651 to 674 (RAPHIISWTSLWVASALAILSWSS) are cleaved as a propeptide — removed in mature form.

The protein belongs to the peptidase M24B family. Homotrimer. The cofactor is Zn(2+). Post-translationally, N-glycosylated. In terms of tissue distribution, strongly expressed in small intestine, heart and lung. Also detected in testis, skeletal muscle, spleen, liver, kidney, brain, uterus, eye, lymph node, thymus, stomach, prostate and bone marrow.

It is found in the cell membrane. The catalysed reaction is Release of any N-terminal amino acid, including proline, that is linked to proline, even from a dipeptide or tripeptide.. Membrane-bound metalloprotease which catalyzes the removal of a penultimate prolyl residue from the N-termini of peptides, such as Arg-Pro-Pro. May play a role in the metabolism of the vasodilator bradykinin. The chain is Xaa-Pro aminopeptidase 2 from Mus musculus (Mouse).